The following is a 531-amino-acid chain: Acetate CoA-transferase YdiF (531 aa).

Glu-333 functions as the 5-glutamyl coenzyme A thioester intermediate in the catalytic mechanism.

Belongs to the 3-oxoacid CoA-transferase family. In terms of assembly, homotetramer; dimer of dimers.

It catalyses the reaction an acyl-CoA + acetate = a carboxylate + acetyl-CoA. Functionally, coA transferase having broad substrate specificity for short-chain acyl-CoA thioesters with the activity decreasing when the length of the carboxylic acid chain exceeds four carbons. May play a role in short-chain fatty acid metabolism in E.coli. The protein is Acetate CoA-transferase YdiF (ydiF) of Escherichia coli (strain K12).